The chain runs to 201 residues: Probable calcium-binding protein CML15 (201 aa).

The segment at Met-1 to Glu-55 is disordered. EF-hand domains lie at Ala-51–Ala-86, Val-87–Asp-122, Ala-125–Ala-160, and Ala-161–Phe-196. Residues Asp-64, Asn-66, Asp-68, Arg-70, Glu-75, Asp-100, Asp-102, Asp-104, Tyr-106, Glu-111, Asp-138, Asp-140, Asn-142, Glu-149, Asp-174, Asn-176, Asp-178, and Glu-185 each contribute to the Ca(2+) site.

Potential calcium sensor. This Oryza sativa subsp. japonica (Rice) protein is Probable calcium-binding protein CML15 (CML15).